Here is a 283-residue protein sequence, read N- to C-terminus: Undecaprenyl-diphosphatase (283 aa).

7 consecutive transmembrane segments (helical) span residues 1–21, 40–60, 85–105, 117–137, 196–216, 232–252, and 258–278; these read MDIIQAIVLGIIQGLTEFLPI, GAAFTAIIQIGTLAAVLIYFY, SRMGWMISAGTIPIVVLGLLF, YIISGSLILLALVLMYAEYLV, FSFLLSLPAVFAAGVYQLLKV, VATVVSGVIGYASIAFLLDYL, and YLFIIYRILLGVFLLAMLSMG.

It belongs to the UppP family.

The protein localises to the cell inner membrane. The catalysed reaction is di-trans,octa-cis-undecaprenyl diphosphate + H2O = di-trans,octa-cis-undecaprenyl phosphate + phosphate + H(+). Its function is as follows. Catalyzes the dephosphorylation of undecaprenyl diphosphate (UPP). Confers resistance to bacitracin. This chain is Undecaprenyl-diphosphatase, found in Chloroherpeton thalassium (strain ATCC 35110 / GB-78).